Reading from the N-terminus, the 69-residue chain is Amphipathic peptide StCT2 (69 aa).

Positions 1 to 23 are cleaved as a signal peptide; sequence MKTQFAVLIISMILMQMLVQTEA. Ile37 carries the post-translational modification Isoleucine amide. Residues 41-69 constitute a propeptide that is removed on maturation; that stretch reads SLRNQDQFDNMFDSDLSDADLKLLDDLFD.

This sequence belongs to the non-disulfide-bridged peptide (NDBP) superfamily. Short antimicrobial peptide (group 4) family. As to expression, expressed by the venom gland.

The protein localises to the secreted. It is found in the target cell membrane. Its function is as follows. Antimicrobial peptide that is rapidly bactericidal against Gram-positive bacteria. The chain is Amphipathic peptide StCT2 from Scorpiops tibetanus (Scorpion).